The chain runs to 154 residues: Ascorbate-specific PTS system EIIA component (154 aa).

Residues 6-150 (SLAENNSIRL…QEVLDLIDRT (145 aa)) enclose the PTS EIIA type-2 domain. His68 serves as the catalytic Tele-phosphohistidine intermediate. His68 is subject to Phosphohistidine.

It localises to the cytoplasm. Its function is as follows. The phosphoenolpyruvate-dependent sugar phosphotransferase system (sugar PTS), a major carbohydrate active transport system, catalyzes the phosphorylation of incoming sugar substrates concomitantly with their translocation across the cell membrane. The enzyme II UlaABC PTS system is involved in ascorbate transport. This Salmonella paratyphi A (strain ATCC 9150 / SARB42) protein is Ascorbate-specific PTS system EIIA component (ulaC).